The following is a 508-amino-acid chain: Photosystem II CP47 reaction center protein (508 aa).

6 helical membrane passes run 21 to 36 (SVHI…WAGS), 101 to 115 (IVFS…IWHW), 140 to 156 (GIHL…FGAF), 203 to 218 (IAAG…FHLS), 237 to 252 (VLSS…AFVV), and 457 to 472 (TFAL…HGAR).

It belongs to the PsbB/PsbC family. PsbB subfamily. PSII is composed of 1 copy each of membrane proteins PsbA, PsbB, PsbC, PsbD, PsbE, PsbF, PsbH, PsbI, PsbJ, PsbK, PsbL, PsbM, PsbT, PsbX, PsbY, PsbZ, Psb30/Ycf12, at least 3 peripheral proteins of the oxygen-evolving complex and a large number of cofactors. It forms dimeric complexes. The cofactor is Binds multiple chlorophylls. PSII binds additional chlorophylls, carotenoids and specific lipids..

It localises to the plastid. The protein resides in the chloroplast thylakoid membrane. One of the components of the core complex of photosystem II (PSII). It binds chlorophyll and helps catalyze the primary light-induced photochemical processes of PSII. PSII is a light-driven water:plastoquinone oxidoreductase, using light energy to abstract electrons from H(2)O, generating O(2) and a proton gradient subsequently used for ATP formation. This chain is Photosystem II CP47 reaction center protein, found in Drimys granadensis.